Reading from the N-terminus, the 444-residue chain is Protein EMP46 (444 aa).

Positions 1 to 46 (MTTRKTASSLQLLGKITGTKAGTKQKKMNFINGLIWLYMCVWMVHG) are cleaved as a signal peptide. At 47 to 408 (KVTQKDELKW…YGKQTKGHDE (362 aa)) the chain is on the lumenal side. The L-type lectin-like domain occupies 52 to 269 (DELKWNKGYS…EILKMKLYDG (218 aa)). Tyrosine 177 serves as a coordination point for K(+). Residues cysteine 196 and cysteine 230 are joined by a disulfide bond. A helical transmembrane segment spans residues 409-429 (IFSKISVWLALLIFIMITLAY). Residues 429–432 (YYMF) are mediates the interactions with COPI and COPII coat complexes. Residues 430–444 (YMFRINQDIKKVKLL) are Cytoplasmic-facing. A Di-lysine motif motif is present at residues 440-444 (KVKLL).

Belongs to the EMP46/EMP47 family. Interacts with EMP47 in the endoplasmic reticulum membrane in order to be transported to the Golgi apparatus. Interacts with the coatomer proteins COP1, SEC21 and SEC23.

It is found in the golgi apparatus membrane. The protein resides in the endoplasmic reticulum membrane. In terms of biological role, involved in the secretion of glycoproteins and in nucleus architecture and gene silencing. In Saccharomyces cerevisiae (strain ATCC 204508 / S288c) (Baker's yeast), this protein is Protein EMP46 (EMP46).